A 418-amino-acid polypeptide reads, in one-letter code: Serine hydroxymethyltransferase (418 aa).

(6S)-5,6,7,8-tetrahydrofolate contacts are provided by residues leucine 118 and 122–124; that span reads GHL. Position 227 is an N6-(pyridoxal phosphate)lysine (lysine 227). Residue glutamate 242 coordinates (6S)-5,6,7,8-tetrahydrofolate.

It belongs to the SHMT family. Homodimer. Pyridoxal 5'-phosphate is required as a cofactor.

It is found in the cytoplasm. It carries out the reaction (6R)-5,10-methylene-5,6,7,8-tetrahydrofolate + glycine + H2O = (6S)-5,6,7,8-tetrahydrofolate + L-serine. Its pathway is one-carbon metabolism; tetrahydrofolate interconversion. It functions in the pathway amino-acid biosynthesis; glycine biosynthesis; glycine from L-serine: step 1/1. In terms of biological role, catalyzes the reversible interconversion of serine and glycine with tetrahydrofolate (THF) serving as the one-carbon carrier. This reaction serves as the major source of one-carbon groups required for the biosynthesis of purines, thymidylate, methionine, and other important biomolecules. Also exhibits THF-independent aldolase activity toward beta-hydroxyamino acids, producing glycine and aldehydes, via a retro-aldol mechanism. The chain is Serine hydroxymethyltransferase from Chloroflexus aggregans (strain MD-66 / DSM 9485).